Here is a 327-residue protein sequence, read N- to C-terminus: Zinc transport protein ZntB (327 aa).

At 1 to 271 the chain is on the cytoplasmic side; that stretch reads MESFAGKELQ…AMNRRTYTMS (271 aa). Residues 272–292 traverse the membrane as a helical segment; sequence LLAMVFLPTTFLTGLFGVNLG. Over 293–300 the chain is Periplasmic; that stretch reads GIPGGDAP. A helical transmembrane segment spans residues 301-321; the sequence is FGFFTFCLMLVILVGGVAWWL. Residues 322 to 327 are Cytoplasmic-facing; it reads KRSKWL.

This sequence belongs to the CorA metal ion transporter (MIT) (TC 1.A.35) family.

It localises to the cell inner membrane. It carries out the reaction Zn(2+)(out) + H(+)(out) = Zn(2+)(in) + H(+)(in). Zinc transporter. Acts as a Zn(2+):proton symporter, which likely mediates zinc ion uptake. The protein is Zinc transport protein ZntB of Pectobacterium carotovorum subsp. carotovorum (strain PC1).